The chain runs to 585 residues: MNRILSVTLCLFFIYLYIYKTYGKVKNTDEGLSNIYGAKYYLRSGLFNEKNGKGQKYEDLEEEKEGENDDEEDSNSEESNNDEENELIKGQEGVEQETHGSEDEVSNGREDKVSNGGEDEVSNGGEDEVSNGREDKVSNGGEDEVSNGREDKVSNGGEDEVSNGREDKVSNGGEDEVSNGREDKVSNGGEDEVSNGREDKVSNGREDKVSNGGEDEVSNGREDKVSNGREDKVSNGGEDEVSNGREDKVSNGGEDEVSNGREDKVSNGGEDEVSNGREDKVSNGREDEVSNGREDKVSNGGEDEVSNGREDKVSNGGEDEVSNGREDKVSNGREDKVSNGGEDEVSNGREDKVSNGGEDEVSNGREDKVSNGREDKVSNGREDEVSNGREDKVSNGGEDEVSNGREDKVSNGREDKVSNGGEDEVSNGREDKVSNGGEDEVSNGREDKVSNGREDKVSNGREDKVSNGGEDEVSNGGEDEVSNGREDKVSNGGEDEVSNGREDKVSNGGEDEVSNGREDKVSNGGEDEVSNGREDKVSNGREDEVSNGREDKGGAGTDGELSHNSESHTKNKKSKNSIINMLIGM.

The signal sequence occupies residues 1–23; that stretch reads MNRILSVTLCLFFIYLYIYKTYG. The segment at 51–585 is disordered; it reads NGKGQKYEDL…NSIINMLIGM (535 aa). Positions 59-85 are enriched in acidic residues; the sequence is DLEEEKEGENDDEEDSNSEESNNDEEN. A compositionally biased stretch (basic and acidic residues) spans 96–113; that stretch reads QETHGSEDEVSNGREDKV. A run of 56 repeats spans residues 102–109, 110–117, 118–125, 126–133, 134–141, 142–149, 150–157, 158–165, 166–173, 174–181, 182–189, 190–197, 198–205, 206–213, 214–221, 222–229, 230–237, 238–245, 246–253, 254–261, 262–269, 270–277, 278–285, 286–293, 294–301, 302–309, 310–317, 318–325, 326–333, 334–341, 342–349, 350–357, 358–365, 366–373, 374–381, 382–389, 390–397, 398–405, 406–413, 414–421, 422–429, 430–437, 438–445, 446–453, 454–461, 462–469, 470–477, 478–485, 486–493, 494–501, 502–509, 510–517, 518–525, 526–533, 534–541, and 542–549. Positions 102–549 are 56 X 8 AA tandem repeats of E-D-[EK]-V-S-N-G-[RG]; it reads EDEVSNGRED…GREDEVSNGR (448 aa). The span at 117–129 shows a compositional bias: acidic residues; the sequence is GEDEVSNGGEDEV. 2 stretches are compositionally biased toward basic and acidic residues: residues 194–209 and 218–233; these read SNGREDKVSNGREDKV. The span at 274–297 shows a compositional bias: basic and acidic residues; the sequence is SNGREDKVSNGREDEVSNGREDKV. Residues 322 to 337 show a composition bias toward basic and acidic residues; the sequence is SNGREDKVSNGREDKV. 2 stretches are compositionally biased toward basic and acidic residues: residues 362 to 393 and 402 to 417; these read SNGREDKVSNGREDKVSNGREDEVSNGREDKV and SNGREDKVSNGREDKV. The span at 442 to 465 shows a compositional bias: basic and acidic residues; it reads SNGREDKVSNGREDKVSNGREDKV. Acidic residues predominate over residues 469 to 481; it reads GEDEVSNGGEDEV. Composition is skewed to basic and acidic residues over residues 530 to 553 and 560 to 569; these read SNGREDKVSNGREDEVSNGREDKG and ELSHNSESHT. A compositionally biased stretch (low complexity) spans 576 to 585; that stretch reads NSIINMLIGM.

It localises to the parasitophorous vacuole. Functionally, s antigens are soluble heat-stable proteins present in the sera of some infected individuals. The sequence is that of S-antigen protein from Plasmodium falciparum (isolate 3D7).